The following is a 316-amino-acid chain: L-lactate dehydrogenase 3 (316 aa).

Val16, Asp37, Arg42, and Tyr68 together coordinate NAD(+). Arg91 contacts substrate. Residues Ser104, 121-123 (ASN), and Thr146 each bind NAD(+). Residue 123–126 (NPVD) coordinates substrate. Residue 151–154 (DSSR) participates in substrate binding. 2 residues coordinate beta-D-fructose 1,6-bisphosphate: Arg156 and His171. His178 serves as the catalytic Proton acceptor. Thr233 is a binding site for substrate.

Belongs to the LDH/MDH superfamily. LDH family. Homotetramer.

Its subcellular location is the cytoplasm. The catalysed reaction is (S)-lactate + NAD(+) = pyruvate + NADH + H(+). It participates in fermentation; pyruvate fermentation to lactate; (S)-lactate from pyruvate: step 1/1. Allosterically activated by fructose 1,6-bisphosphate (FBP). Catalyzes the conversion of lactate to pyruvate. This chain is L-lactate dehydrogenase 3, found in Bacillus cereus (strain ATCC 14579 / DSM 31 / CCUG 7414 / JCM 2152 / NBRC 15305 / NCIMB 9373 / NCTC 2599 / NRRL B-3711).